A 127-amino-acid polypeptide reads, in one-letter code: Probable soluble cytochrome b562 1 (127 aa).

Positions 1–21 are cleaved as a signal peptide; it reads MRKIPIIAGVFSLLITSCTFA. Positions 28 and 123 each coordinate heme b.

It belongs to the cytochrome b562 family. Requires heme b as cofactor.

It is found in the periplasm. Electron-transport protein of unknown function. In Yersinia pestis, this protein is Probable soluble cytochrome b562 1 (cybC1).